Reading from the N-terminus, the 306-residue chain is MPSLPVLIDTTTEFDVSSPQNVTQKRSLLLAPPSIAAHEEKLRDIFTTFDRSVTDLQMLDRLSAGFVTLPASTYDLVLVLTDTNGARRNEALELLTRDIFNILTPSMKPSAQLQLQDGPFQANEGREAILAGLVEKHGAFEKPQYQEAAVPLRFGANKRKNKISPEPVKIESVGFVDNYDDDELINEDDLLDEEDLGKPVQQPAECQPETAKKRRRACKDCTCGLAAQLEAEDAERREKANADLNVLKLKTDELNDEVDFTVQGKTGSCNSCSLGDAFRCASCPFIGLPAFKPGEEVRIMNDMAQL.

Residues 21-150 (NVTQKRSLLL…EKPQYQEAAV (130 aa)) are N-terminal SAM-like domain. The tract at residues 151-196 (PLRFGANKRKNKISPEPVKIESVGFVDNYDDDELINEDDLLDEEDL) is linker. [2Fe-2S] cluster contacts are provided by Cys-206, Cys-218, Cys-221, and Cys-223. Positions 206-223 (CQPETAKKRRRACKDCTC) are fe-S binding site A. Residues Cys-269, Cys-272, Cys-280, and Cys-283 each coordinate [4Fe-4S] cluster. 2 consecutive short sequence motifs (cx2C motif) follow at residues 269 to 272 (CNSC) and 280 to 283 (CASC). The fe-S binding site B stretch occupies residues 269 to 283 (CNSCSLGDAFRCASC).

The protein belongs to the anamorsin family. As to quaternary structure, monomer. Interacts with tah18. Interacts with mia40. It depends on [2Fe-2S] cluster as a cofactor. Requires [4Fe-4S] cluster as cofactor.

The protein localises to the cytoplasm. It localises to the mitochondrion intermembrane space. Component of the cytosolic iron-sulfur (Fe-S) protein assembly (CIA) machinery required for the maturation of extramitochondrial Fe-S proteins. Part of an electron transfer chain functioning in an early step of cytosolic Fe-S biogenesis, facilitating the de novo assembly of a [4Fe-4S] cluster on the scaffold complex cfd1-nbp35. Electrons are transferred to dre2 from NADPH via the FAD- and FMN-containing protein tah18. Tah18-dre2 are also required for the assembly of the diferric tyrosyl radical cofactor of ribonucleotide reductase (RNR), probably by providing electrons for reduction during radical cofactor maturation in the catalytic small subunit rnr2. The chain is Fe-S cluster assembly protein dre2 from Talaromyces stipitatus (strain ATCC 10500 / CBS 375.48 / QM 6759 / NRRL 1006) (Penicillium stipitatum).